The sequence spans 362 residues: HLA class I histocompatibility antigen, B alpha chain (362 aa).

An N-terminal signal peptide occupies residues 1–24; that stretch reads MLVMAPRTVLLLLSAALALTETWA. The tract at residues 3-11 is VL9 epitope; the sequence is VMAPRTVLL. An alpha-1 region spans residues 25 to 114; it reads GSHSMRYFYT…LRGYYNQSEA (90 aa). Residues 25-309 lie on the Extracellular side of the membrane; it reads GSHSMRYFYT…PSSQSTVPIV (285 aa). N87 contributes to the a peptide antigen binding site. Residues 101 to 107 carry the Bw6 motif motif; it reads SLRNLRG. Position 108 (Y108) interacts with a peptide antigen. An N-linked (GlcNAc...) asparagine glycan is attached at N110. The segment at 115–206 is alpha-2; sequence GSHTLQSMYG…ENGKDKLERA (92 aa). C125 and C188 are oxidised to a cystine. 5 residues coordinate a peptide antigen: T167, K170, E176, Y183, and Y195. Residues 207–298 form an alpha-3 region; that stretch reads DPPKTHVTHH…GLPKPLTLRW (92 aa). Positions 209 to 295 constitute an Ig-like C1-type domain; it reads PKTHVTHHPI…QHEGLPKPLT (87 aa). A disulfide bond links C227 and C283. A connecting peptide region spans residues 299 to 309; it reads EPSSQSTVPIV. The chain crosses the membrane as a helical span at residues 310 to 333; the sequence is GIVAGLAVLAVVVIGAVVAAVMCR. Over 334-362 the chain is Cytoplasmic; the sequence is RKSSGGKGGSYSQAACSDSAQGSDVSLTA. Residues 337–362 are disordered; sequence SGGKGGSYSQAACSDSAQGSDVSLTA. Polar residues predominate over residues 346-362; sequence QAACSDSAQGSDVSLTA.

As to quaternary structure, heterotrimer that consists of an alpha chain HLA-B, a beta chain B2M and a peptide (peptide-HLA-B-B2M). Early in biogenesis, HLA-B-B2M dimer interacts with the components of the peptide-loading complex composed of TAPBP, TAP1-TAP2, TAPBPL, PDIA3/ERP57 and CALR. Interacts with TAP1-TAP2 transporter via TAPBP; this interaction is obligatory for the loading of peptide epitopes delivered to the ER by TAP1-TAP2 transporter. Interacts with TAPBPL; TAPBPL binds peptide-free HLA-B-B2M complexes or those loaded with low affinity peptides, likely facilitating peptide exchange for higher affinity peptides. Only optimally assembled peptide-HLA-B-B2M trimer translocates to the surface of antigen-presenting cells, where it interacts with TCR and CD8 coreceptor on the surface of T cells. HLA-B (via polymorphic alpha-1 and alpha-2 domains) interacts with antigen-specific TCR (via CDR1, CDR2 and CDR3 domains). One HLA-B molecule (mainly via nonpolymorphic alpha-3 domain) interacts with one CD8A homodimer (via CDR-like loop); this interaction ensures peptide-HLA-B-B2M recognition by CD8-positive T cells only. Allele B*57:01 interacts (via Bw4 motif) with KIR3DL1 (via Ig-like C2-type domain); this interaction may interfere with peptide binding. Allele B*46:01 interacts with KIR2DL3. In terms of assembly, (Microbial infection) Interacts with HTLV-1 accessory protein p12I.

It localises to the cell membrane. The protein localises to the endoplasmic reticulum membrane. Antigen-presenting major histocompatibility complex class I (MHCI) molecule. In complex with B2M/beta 2 microglobulin displays primarily viral and tumor-derived peptides on antigen-presenting cells for recognition by alpha-beta T cell receptor (TCR) on HLA-B-restricted CD8-positive T cells, guiding antigen-specific T cell immune response to eliminate infected or transformed cells. May also present self-peptides derived from the signal sequence of secreted or membrane proteins, although T cells specific for these peptides are usually inactivated to prevent autoreactivity. Both the peptide and the MHC molecule are recognized by TCR, the peptide is responsible for the fine specificity of antigen recognition and MHC residues account for the MHC restriction of T cells. Typically presents intracellular peptide antigens of 8 to 13 amino acids that arise from cytosolic proteolysis via constitutive proteasome and IFNG-induced immunoproteasome. Can bind different peptides containing allele-specific binding motifs, which are mainly defined by anchor residues at position 2 and 9. In terms of biological role, allele B*07:02: Displays peptides sharing a common signature motif, namely a Pro residue at position 2 and mainly a Leu anchor residue at the C-terminus. Presents a long peptide (APRGPHGGAASGL) derived from the cancer-testis antigen CTAG1A/NY-ESO-1, eliciting a polyclonal CD8-positive T cell response against tumor cells. Presents viral epitopes derived from HIV-1 gag-pol (TPQDLNTML) and Nef (RPQVPLRPM). Presents an immunodominant epitope derived from SARS-CoV-2 N/nucleoprotein (SPRWYFYYL). Displays self-peptides including a peptide derived from the signal sequence of HLA-DPB1 (APRTVALTA). Its function is as follows. Allele B*08:01: Presents to CD8-positive T cells viral epitopes derived from EBV/HHV-4 EBNA3 (QAKWRLQTL), eliciting cytotoxic T cell response. Functionally, allele B*13:02: Presents multiple HIV-1 epitopes derived from gag (RQANFLGKI, GQMREPRGSDI), nef (RQDILDLWI), gag-pol (RQYDQILIE, GQGQWTYQI) and rev (LQLPPLERL), all having in common a Gln residue at position 2 and mainly hydrophobic amino acids Leu, Ile or Val at the C-terminus. Associated with successful control of HIV-1 infection. Allele B*18:01: Preferentially presents octomeric and nonameric peptides sharing a common motif, namely a Glu at position 2 and Phe or Tyr anchor residues at the C-terminus. Presents an EBV/HHV-4 epitope derived from BZLF1 (SELEIKRY). May present to CD8-positive T cells an antigenic peptide derived from MAGEA3 (MEVDPIGHLY), triggering an anti-tumor immune response. May display a broad repertoire of self-peptides with a preference for peptides derived from RNA-binding proteins. In terms of biological role, allele B*27:05: Presents to CD8-positive T cells immunodominant viral epitopes derived from HCV POLG (ARMILMTHF), HIV-1 gag (KRWIILGLNK), IAV NP (SRYWAIRTR), SARS-CoV-2 N/nucleoprotein (QRNAPRITF), EBV/HHV-4 EBNA4 (HRCQAIRKK) and EBV/HHV-4 EBNA6 (RRIYDLIEL), conferring longterm protection against viral infection. Can present self-peptides derived from cytosolic and nuclear proteins. All peptides carry an Arg at position 2. The peptide-bound form interacts with NK cell inhibitory receptor KIR3DL1 and inhibits NK cell activation in a peptide-specific way, being particularly sensitive to the nature of the amino acid side chain at position 8 of the antigenic peptide. KIR3DL1 fails to recognize HLA-B*27:05 in complex with B2M and EBV/HHV-4 EBNA6 (RRIYDLIEL) peptide, which can lead to increased activation of NK cells during infection. May present an altered repertoire of peptides in the absence of TAP1-TAP2 and TAPBPL. Its function is as follows. Allele B*40:01: Presents immunodominant viral epitopes derived from EBV/HHV-4 LMP2 (IEDPPFNSL) and SARS-CoV-2 N/nucleoprotein (MEVTPSGTWL), triggering memory CD8-positive T cell response. Displays self-peptides sharing a signature motif, namely a Glu at position 2 and a Leu anchor residue at the C-terminus. Functionally, allele B*41:01: Displays self-peptides sharing a signature motif, namely a Glu at position 2 and Ala or Pro anchor residues at the C-terminus. Allele B*44:02: Presents immunodominant viral epitopes derived from EBV/HHV-4 EBNA4 (VEITPYKPTW) and EBNA6 (AEGGVGWRHW, EENLLDFVRF), triggering memory CD8-positive T cell response. Displays self-peptides sharing a signature motif, namely a Glu at position 2 and Phe, Tyr or Trp anchor residues at the C-terminus. In terms of biological role, allele B*45:01: Displays self-peptides sharing a signature motif, namely a Glu at position 2 and Ala or Pro anchor residues at the C-terminus. Its function is as follows. Allele B*46:01: Preferentially presents nonameric peptides sharing a signature motif, namely Ala and Leu at position 2 and Tyr, Phe, Leu, or Met anchor residues at the C-terminus. The peptide-bound form interacts with KIR2DL3 and inhibits NK cell cytotoxic response in a peptide-specific way. Functionally, allele B*47:01: Displays self-peptides sharing a signature motif, namely an Asp at position 2 and Leu or Met anchor residues at the C-terminus. Allele B*49:01: Displays self-peptides sharing a signature motif, namely a Glu at position 2 and Ile or Val anchor residues at the C-terminus. In terms of biological role, allele B*50:01: Displays self-peptides sharing a signature motif, namely a Glu at position 2 and Ala or Pro anchor residues at the C-terminus. Its function is as follows. Allele B*51:01: Presents an octomeric HIV-1 epitope derived from gag-pol (TAFTIPSI) to the public TRAV17/TRBV7-3 TCR clonotype, strongly suppressing HIV-1 replication. Functionally, allele B*54:01: Displays peptides sharing a common signature motif, namely a Pro residue at position 2 and Ala anchor residue at the C-terminus. Allele B*55:01: Displays peptides sharing a common signature motif, namely a Pro residue at position 2 and Ala anchor residue at the C-terminus. In terms of biological role, allele B*56:01: Displays peptides sharing a common signature motif, namely a Pro residue at position 2 and Ala anchor residue at the C-terminus. Its function is as follows. Allele B*57:01: The peptide-bound form recognizes KIR3DL1 and inhibits NK cell cytotoxic response. Presents HIV gag peptides (immunodominant KAFSPEVIPMF and subdominant KALGPAATL epitopes) predominantly to CD8-positive T cell clones expressing a TRAV41-containing TCR, triggering HLA-B-restricted T cell responses. Functionally, allele B*67:01: Displays peptides sharing a common signature motif, namely a Pro residue at position 2 and Leu anchor residue at the C-terminus. The polypeptide is HLA class I histocompatibility antigen, B alpha chain (Homo sapiens (Human)).